Consider the following 197-residue polypeptide: tRNA(Phe) 7-((3-amino-3-carboxypropyl)-4-demethylwyosine(37)-N(4))-methyltransferase (197 aa).

Belongs to the TYW3 family.

It carries out the reaction 4-demethyl-7-[(3S)-3-amino-3-carboxypropyl]wyosine(37) in tRNA(Phe) + S-adenosyl-L-methionine = 7-[(3S)-3-amino-3-carboxypropyl]wyosine(37) in tRNA(Phe) + S-adenosyl-L-homocysteine + H(+). In terms of biological role, S-adenosyl-L-methionine-dependent methyltransferase that acts as a component of the wyosine derivatives biosynthesis pathway. Probably methylates N-4 position of wybutosine-86 to produce wybutosine-72. This Thermococcus sibiricus (strain DSM 12597 / MM 739) protein is tRNA(Phe) 7-((3-amino-3-carboxypropyl)-4-demethylwyosine(37)-N(4))-methyltransferase.